A 519-amino-acid chain; its full sequence is O-fucosyltransferase 1 (519 aa).

At 1–24 (MRRLGHHRLHGKTGGVGTKGMVAK) the chain is on the cytoplasmic side. The chain crosses the membrane as a helical; Signal-anchor for type II membrane protein span at residues 25–45 (LSIGVIVLLICTLSLLFSANI). Residues 46-519 (GSNREPTRPS…TNSTVTGLER (474 aa)) lie on the Lumenal side of the membrane. Positions 67-86 (KSGGWRPSSAPRSDWPPPTK) are disordered. N-linked (GlcNAc...) asparagine glycosylation is present at Asn118. 260-262 (HLR) is a binding site for substrate. 3 N-linked (GlcNAc...) asparagine glycosylation sites follow: Asn327, Asn357, and Asn511. The interval 497–519 (RLESIRDPDSTSQTNSTVTGLER) is disordered. Polar residues predominate over residues 506–519 (STSQTNSTVTGLER).

It belongs to the glycosyltransferase GT106 family.

The protein resides in the golgi apparatus membrane. Its pathway is glycan metabolism. This is O-fucosyltransferase 1 from Arabidopsis thaliana (Mouse-ear cress).